The chain runs to 567 residues: R-linalool synthase QH1, chloroplastic (567 aa).

A chloroplast-targeting transit peptide spans 1 to 24 (GNAYMRIYSTKTTRITANATVNAA). (2E)-geranyl diphosphate-binding residues include arginine 282, aspartate 319, aspartate 323, arginine 460, and aspartate 463. Mg(2+) is bound by residues aspartate 319 and aspartate 323. The DDXXD motif signature appears at 319–323 (DDVYD). The Mg(2+) site is built by aspartate 463, threonine 467, and glutamate 471.

It belongs to the terpene synthase family. Tpsb subfamily. Mg(2+) serves as cofactor. As to expression, highly expressed in leaves and lower levels in inflorescences. Not detected in stems, stem epidermis, stem stele or roots.

It is found in the plastid. It localises to the chloroplast. The catalysed reaction is (2E)-geranyl diphosphate + H2O = (R)-linalool + diphosphate. Its pathway is secondary metabolite biosynthesis; terpenoid biosynthesis. Functionally, monoterpene synthase that catalyzes the formation of (3R)-linalool from geranyl diphosphate, but not from isopentenyl diphosphate, dimethylallyl diphosphate, chrysanthemyl diphosphate, farnesyl diphosphate, (+)-copalyl diphosphate or geranylgeranyl diphosphate. This Artemisia annua (Sweet wormwood) protein is R-linalool synthase QH1, chloroplastic (QH1).